Here is a 625-residue protein sequence, read N- to C-terminus: SWR1-complex protein 3 (625 aa).

Disordered regions lie at residues 1–53, 194–234, 254–273, and 324–434; these read MPAV…EVGN, KELK…KENK, KLKEQNKNKQGSPSSSMHDP, and NPVN…NAIK. A compositionally biased stretch (basic residues) spans 20–31; it reads SRTRTRSRRGKR. Acidic residues predominate over residues 35–53; it reads DDDDDDDEESDDAYDEVGN. 2 stretches are compositionally biased toward basic and acidic residues: residues 194–214 and 221–234; these read KELKRKNDAEAKRLRMEERKR and IAKEQKLQLQKENK. Positions 261–270 are enriched in polar residues; sequence NKQGSPSSSM. Over residues 342 to 352 the composition is skewed to basic and acidic residues; it reads KAKDVAEDHRL. Residues 353–364 are compositionally biased toward polar residues; that stretch reads NSITLVKSSKTA. Composition is skewed to basic and acidic residues over residues 368 to 388 and 396 to 420; these read PEPKKADDENAEKQQSKEAKT and DVKKEEEDVKEKGVKSEDTQKKEDN.

It belongs to the SWC3 family. As to quaternary structure, component of the SWR1 chromatin remodeling complex composed of at least ACT1, ARP4, RVB1, RVB2, ARP6, YAF9, VPS71, VPS72, SWC3, SWC4, SWC5, SWC7 and SWR1, and perhaps BDF1.

It is found in the nucleus. In terms of biological role, component of the SWR1 complex which mediates the ATP-dependent exchange of histone H2A for the H2A variant HZT1 leading to transcriptional regulation of selected genes by chromatin remodeling. Involved in chromosome stability. This Saccharomyces cerevisiae (strain ATCC 204508 / S288c) (Baker's yeast) protein is SWR1-complex protein 3 (SWC3).